A 148-amino-acid chain; its full sequence is MSQTAKVLLINGPNLNLLGRREPGHYGHQTLTTIVDELTRNATQAGVTLEHIQSNAEYQLIDAIHATDAQFIIINPAAFTHTSVALRDAILGVAIPFIEVHLSNVHAREPFRHHSYFSDKALGVICGLGAQGYDFALQAAIKHLSDKH.

Residue Tyr-26 is the Proton acceptor of the active site. The substrate site is built by Asn-75, His-81, and Asp-88. The active-site Proton donor is the His-101. Substrate contacts are provided by residues Leu-102–Ser-103 and Arg-112.

This sequence belongs to the type-II 3-dehydroquinase family. In terms of assembly, homododecamer.

The catalysed reaction is 3-dehydroquinate = 3-dehydroshikimate + H2O. Its pathway is metabolic intermediate biosynthesis; chorismate biosynthesis; chorismate from D-erythrose 4-phosphate and phosphoenolpyruvate: step 3/7. Its function is as follows. Catalyzes a trans-dehydration via an enolate intermediate. In Shewanella frigidimarina (strain NCIMB 400), this protein is 3-dehydroquinate dehydratase.